Here is a 444-residue protein sequence, read N- to C-terminus: Phosphoglucosamine mutase (444 aa).

The active-site Phosphoserine intermediate is Ser102. Mg(2+) is bound by residues Ser102, Asp241, Asp243, and Asp245. At Ser102 the chain carries Phosphoserine.

This sequence belongs to the phosphohexose mutase family. Mg(2+) is required as a cofactor. In terms of processing, activated by phosphorylation.

It carries out the reaction alpha-D-glucosamine 1-phosphate = D-glucosamine 6-phosphate. Its function is as follows. Catalyzes the conversion of glucosamine-6-phosphate to glucosamine-1-phosphate. This is Phosphoglucosamine mutase from Acidovorax ebreus (strain TPSY) (Diaphorobacter sp. (strain TPSY)).